The chain runs to 23 residues: ENFAGGCTPGYQRTADGRCKPTF.

Cysteine 7 and cysteine 19 are oxidised to a cystine.

It belongs to the GBP/PSP1/paralytic peptide family. Hemolymph.

Causes rapid, rigid paralysis when injected into Lepidopteran larvae. The physiological role may be to reduce hemolymph loss following injury and promote wound healing. The sequence is that of Paralytic peptide 2 from Spodoptera exigua (Beet armyworm).